The following is a 338-amino-acid chain: DNA-directed RNA polymerase subunit alpha (338 aa).

The interval 1 to 234 (MIHKNWAELI…DQLSVFVNFD (234 aa)) is alpha N-terminal domain (alpha-NTD). The tract at residues 250-338 (FDPRLLKKVD…DLAKRFDDQF (89 aa)) is alpha C-terminal domain (alpha-CTD).

It belongs to the RNA polymerase alpha chain family. As to quaternary structure, homodimer. The RNAP catalytic core consists of 2 alpha, 1 beta, 1 beta' and 1 omega subunit. When a sigma factor is associated with the core the holoenzyme is formed, which can initiate transcription.

The enzyme catalyses RNA(n) + a ribonucleoside 5'-triphosphate = RNA(n+1) + diphosphate. Its function is as follows. DNA-dependent RNA polymerase catalyzes the transcription of DNA into RNA using the four ribonucleoside triphosphates as substrates. The protein is DNA-directed RNA polymerase subunit alpha of Paracoccus denitrificans (strain Pd 1222).